Reading from the N-terminus, the 201-residue chain is LexA repressor (201 aa).

The segment at residues 28–48 (RAEIANQLGFRSANAAEEHLK) is a DNA-binding region (H-T-H motif). Active-site for autocatalytic cleavage activity residues include Ser118 and Lys155.

Belongs to the peptidase S24 family. Homodimer.

It carries out the reaction Hydrolysis of Ala-|-Gly bond in repressor LexA.. Functionally, represses a number of genes involved in the response to DNA damage (SOS response), including recA and lexA. In the presence of single-stranded DNA, RecA interacts with LexA causing an autocatalytic cleavage which disrupts the DNA-binding part of LexA, leading to derepression of the SOS regulon and eventually DNA repair. In Saccharophagus degradans (strain 2-40 / ATCC 43961 / DSM 17024), this protein is LexA repressor.